The following is a 439-amino-acid chain: MSSPKVGFVSLGCPKALVDSERILTQLRTEGYEVTPEYNDADVVVVNTCGFIDSAKAESLEAIGEAIAENGKVIVTGCMGVEESVIRQVHPSVLAVTGPQQYEEVVRAVHGVAPPRQDHNPYLDLVPPQGVKLTPRHYAYLKISEGCNHRCSFCIIPSMRGDLVSRPVGDVLSEAERLVRAGVKELLVISQDTSAYGVDIKYRSGFWNGRPVKTRMTELCAALSELGVWTRLHYVYPYPHVDEVIGLMADGKVLPYLDIPFQHASPRILRAMKRPAFEDKTLARIKRWREECPDLTLRSTFIVGFPGETEEDFQYLLDWMSEAQLDRVGCFQYSPVEGAPANTLDNPVPDEVKQERWERFMEHQQAISTARLSTRVGREIDVLIDSVDEEGAVGRSSADAPEIDGCVYVDSEQPLKAGDMVRVRVTDSDEYDLWGERIA.

In terms of domain architecture, MTTase N-terminal spans 4–114; that stretch reads PKVGFVSLGC…VVRAVHGVAP (111 aa). Residues Cys13, Cys49, Cys78, Cys147, Cys151, and Cys154 each contribute to the [4Fe-4S] cluster site. Residues 133–370 enclose the Radical SAM core domain; that stretch reads LTPRHYAYLK…MEHQQAISTA (238 aa). In terms of domain architecture, TRAM spans 373–439; the sequence is STRVGREIDV…EYDLWGERIA (67 aa).

Belongs to the methylthiotransferase family. RimO subfamily. Requires [4Fe-4S] cluster as cofactor.

It localises to the cytoplasm. The catalysed reaction is L-aspartate(89)-[ribosomal protein uS12]-hydrogen + (sulfur carrier)-SH + AH2 + 2 S-adenosyl-L-methionine = 3-methylsulfanyl-L-aspartate(89)-[ribosomal protein uS12]-hydrogen + (sulfur carrier)-H + 5'-deoxyadenosine + L-methionine + A + S-adenosyl-L-homocysteine + 2 H(+). Its function is as follows. Catalyzes the methylthiolation of an aspartic acid residue of ribosomal protein uS12. This is Ribosomal protein uS12 methylthiotransferase RimO from Bordetella parapertussis (strain 12822 / ATCC BAA-587 / NCTC 13253).